A 235-amino-acid chain; its full sequence is Vinculin (235 aa).

This sequence belongs to the vinculin/alpha-catenin family. Exhibits self-association properties. Phosphorylated on serines, threonines and tyrosines. In terms of processing, acetylated by myristic acid and/or palmitic acid.

It is found in the cell membrane. Its subcellular location is the cell junction. The protein resides in the adherens junction. The protein localises to the focal adhesion. It localises to the cytoplasm. It is found in the cytoskeleton. Its subcellular location is the sarcolemma. The protein resides in the cell projection. The protein localises to the podosome. In terms of biological role, involved in cell adhesion. May be involved in the attachment of the actin-based microfilaments to the plasma membrane. This Xenopus laevis (African clawed frog) protein is Vinculin (vcl).